The primary structure comprises 328 residues: Naphthalene 1,2-dioxygenase/salicylate 5-hydroxylase systems, ferredoxin--NAD(P)(+), reductase component (328 aa).

The 89-residue stretch at 1–89 folds into the 2Fe-2S ferredoxin-type domain; it reads MELVVEPLNL…DCTIEIPESD (89 aa). [2Fe-2S] cluster contacts are provided by C35, C40, C43, and C73. An FAD-binding FR-type domain is found at 96–193; it reads ARIVKGTVTA…SGPLGTAYLR (98 aa).

Belongs to the bacterial ring-hydroxylating dioxygenase ferredoxin reductase family. In terms of assembly, ferredoxin reductase NagAa belongs to both the salicylate 5-hydroxylase (S5H) and the naphthalene 1,2-dioxygenase (NDO) multicomponent enzyme systems. The NDO multicomponent enzyme system is composed of an electron transfer component and a dioxygenase component (iron sulfur protein (ISP)). The electron transfer component is composed of a ferredoxin reductase (NagAa) and a ferredoxin (NagAb), and the dioxygenase component is formed by a large alpha subunit (NagAc) and a small beta subunit (NagAd). The S5H multicomponent enzyme system is composed of an electron transfer component and a monooxygenase component. The electron transfer component is comprised of a ferredoxin reductase (NagAa) and a ferredoxin (NagAb), and the monooxygenase component is formed by a large subunit (NagG) and a small subunit (NagH). It depends on [2Fe-2S] cluster as a cofactor. The cofactor is FAD.

The catalysed reaction is 2 reduced [2Fe-2S]-[ferredoxin] + NAD(+) + H(+) = 2 oxidized [2Fe-2S]-[ferredoxin] + NADH. It carries out the reaction 2 reduced [2Fe-2S]-[ferredoxin] + NADP(+) + H(+) = 2 oxidized [2Fe-2S]-[ferredoxin] + NADPH. The protein operates within aromatic compound metabolism; naphthalene degradation. Its function is as follows. Component of two multicomponent enzyme systems which are involved in the catabolism of naphthalene. Plays a role as an electron transfer component for both salicylate 5-hydroxylase (S5H) and naphthalene 1,2-dioxygenase (NDO) systems, by transferring electrons from NAD(P)H to the oxygenase component via the ferredoxin NagAb. The electron transport chain from the two systems can use both NADH and NADPH as electron donors at approximately similar rates. The polypeptide is Naphthalene 1,2-dioxygenase/salicylate 5-hydroxylase systems, ferredoxin--NAD(P)(+), reductase component (Ralstonia sp).